Reading from the N-terminus, the 547-residue chain is CTP synthase (547 aa).

The amidoligase domain stretch occupies residues 1-265; it reads MARFVFITGG…DQAVLDAFSI (265 aa). Ser-13 contributes to the CTP binding site. Ser-13 is a binding site for UTP. ATP contacts are provided by residues 14–19 and Asp-71; that span reads SLGKGL. Mg(2+)-binding residues include Asp-71 and Glu-139. CTP is bound by residues 146 to 148, 186 to 191, and Lys-222; these read DIE and KTKPTQ. Residues 186-191 and Lys-222 each bind UTP; that span reads KTKPTQ. Positions 291-546 constitute a Glutamine amidotransferase type-1 domain; the sequence is NVAIVGKYTQ…VRAAKEVSRL (256 aa). Gly-353 contributes to the L-glutamine binding site. Catalysis depends on Cys-380, which acts as the Nucleophile; for glutamine hydrolysis. L-glutamine-binding positions include 381 to 384, Glu-404, and Arg-474; that span reads LGMQ. Residues His-519 and Glu-521 contribute to the active site.

Belongs to the CTP synthase family. In terms of assembly, homotetramer.

It catalyses the reaction UTP + L-glutamine + ATP + H2O = CTP + L-glutamate + ADP + phosphate + 2 H(+). The enzyme catalyses L-glutamine + H2O = L-glutamate + NH4(+). It carries out the reaction UTP + NH4(+) + ATP = CTP + ADP + phosphate + 2 H(+). It functions in the pathway pyrimidine metabolism; CTP biosynthesis via de novo pathway; CTP from UDP: step 2/2. Its activity is regulated as follows. Allosterically activated by GTP, when glutamine is the substrate; GTP has no effect on the reaction when ammonia is the substrate. The allosteric effector GTP functions by stabilizing the protein conformation that binds the tetrahedral intermediate(s) formed during glutamine hydrolysis. Inhibited by the product CTP, via allosteric rather than competitive inhibition. Catalyzes the ATP-dependent amination of UTP to CTP with either L-glutamine or ammonia as the source of nitrogen. Regulates intracellular CTP levels through interactions with the four ribonucleotide triphosphates. This Dinoroseobacter shibae (strain DSM 16493 / NCIMB 14021 / DFL 12) protein is CTP synthase.